We begin with the raw amino-acid sequence, 712 residues long: BTB/POZ domain-containing protein 18 (712 aa).

Residues 34 to 102 enclose the BTB domain; that stretch reads CDVLLQAEGE…LYTSEMEVSQ (69 aa). Disordered stretches follow at residues 157-176, 212-355, and 374-410; these read VTPSHHPHTPLPTNQTPCPL, RACP…EGQV, and ETPLKNTQDSPQIPDPGGDFQEPSGTQPFSSNEQEMS. The span at 218–228 shows a compositional bias: polar residues; it reads QEKNSSPSSHS. Basic and acidic residues predominate over residues 229-238; it reads QEPRENKNDT. Over residues 277 to 288 the composition is skewed to low complexity; the sequence is SKPSSILSGSSS. Residues 303 to 313 show a composition bias toward basic and acidic residues; that stretch reads VNKETPEDKPK. Residues 396–410 show a composition bias toward polar residues; the sequence is PSGTQPFSSNEQEMS. Residues Ser420, Ser671, and Ser672 each carry the phosphoserine modification. 2 disordered regions span residues 653-676 and 691-712; these read KAGKEVSGHSELLGSLPASSEEEE and TTVPSVWPDPSSESETEVDILT. Over residues 702–712 the composition is skewed to acidic residues; sequence SESETEVDILT.

Its subcellular location is the nucleus. Functionally, specifically required during spermatogenesis to promote expression of piRNA precursors. The piRNA metabolic process mediates the repression of transposable elements during meiosis by forming complexes composed of piRNAs and Piwi proteins and governs the methylation and subsequent repression of transposons, which is essential for the germline integrity. Acts by facilitating transcription elongation at piRNA loci during pachytene. The sequence is that of BTB/POZ domain-containing protein 18 from Homo sapiens (Human).